The sequence spans 906 residues: Formin-like protein 16 (906 aa).

The first 28 residues, 1-28 (MAPAPSPTPLPLFLLLLLLVGVAPLAAA), serve as a signal peptide directing secretion. Positions 34 to 76 (QTRFPSTRTPAFATPPPITSPSPSPGTPTATPSSSPPSSSGKR) are disordered. The segment covering 46–59 (ATPPPITSPSPSPG) has biased composition (pro residues). A compositionally biased stretch (low complexity) spans 60–73 (TPTATPSSSPPSSS). Residues 81–101 (VAVVSTALSSFAVSGLAFFLF) traverse the membrane as a helical segment. 6 disordered regions span residues 113-149 (AGGAGQHYGGAQGGALTGKRPEREPKRPARGNMVDEN), 161-223 (KEGD…SLDS), 250-404 (AYAR…DQQA), 451-474 (RKTKPADSKDASGGSTSAGLGRSN), 677-702 (GSLAKSTDGGNPAASSTSQGPSREER), and 834-906 (LQQQ…SDEE). Gly residues predominate over residues 114-128 (GGAGQHYGGAQGGAL). Pro residues predominate over residues 174–185 (SRRPPQPPPPRP). Basic and acidic residues predominate over residues 186–196 (YRAERRQDAHE). The span at 270-294 (SPSPAPAPAARPASPSPSLPLPPGR) shows a compositional bias: pro residues. The segment covering 295–310 (ESPSRPQSIAAAAVAS) has biased composition (low complexity). Residues 311–383 (PAPPPPPPPK…KGGPPPPPPK (73 aa)) are compositionally biased toward pro residues. The FH2 domain maps to 396-849 (PTGSADQQAK…PTPPPSSSQP (454 aa)). Polar residues-rich tracts occupy residues 463–474 (GGSTSAGLGRSN) and 677–697 (GSLAKSTDGGNPAASSTSQGP). Positions 847–866 (SQPAAPAATTKGAADDAPAP) are enriched in low complexity.

This sequence belongs to the formin-like family. Class-I subfamily.

It localises to the membrane. This Oryza sativa subsp. japonica (Rice) protein is Formin-like protein 16 (FH16).